The sequence spans 476 residues: Ribulose bisphosphate carboxylase large chain (476 aa).

2 residues coordinate substrate: N124 and T174. The active-site Proton acceptor is the K176. Position 178 (K178) interacts with substrate. Mg(2+) contacts are provided by K202, D204, and E205. K202 carries the post-translational modification N6-carboxylysine. The Proton acceptor role is filled by H295. Substrate-binding residues include R296, H328, and S380.

Belongs to the RuBisCO large chain family. Type I subfamily. In terms of assembly, heterohexadecamer of 8 large chains and 8 small chains; disulfide-linked. The disulfide link is formed within the large subunit homodimers. Forms complexes of many stoichiometries with Raf1 with and without RbcS. RuBisCO interacts with the C-terminus of CcmM. Mg(2+) is required as a cofactor. In terms of processing, the disulfide bond which can form in the large chain dimeric partners within the hexadecamer appears to be associated with oxidative stress and protein turnover.

Its subcellular location is the carboxysome. The enzyme catalyses 2 (2R)-3-phosphoglycerate + 2 H(+) = D-ribulose 1,5-bisphosphate + CO2 + H2O. The catalysed reaction is D-ribulose 1,5-bisphosphate + O2 = 2-phosphoglycolate + (2R)-3-phosphoglycerate + 2 H(+). Its function is as follows. RuBisCO catalyzes two reactions: the carboxylation of D-ribulose 1,5-bisphosphate, the primary event in carbon dioxide fixation, as well as the oxidative fragmentation of the pentose substrate in the photorespiration process. Both reactions occur simultaneously and in competition at the same active site. In Nostoc sp. (strain PCC 7120 / SAG 25.82 / UTEX 2576), this protein is Ribulose bisphosphate carboxylase large chain.